The following is a 282-amino-acid chain: ATP phosphoribosyltransferase (282 aa).

It belongs to the ATP phosphoribosyltransferase family. Long subfamily. The cofactor is Mg(2+).

Its subcellular location is the cytoplasm. The enzyme catalyses 1-(5-phospho-beta-D-ribosyl)-ATP + diphosphate = 5-phospho-alpha-D-ribose 1-diphosphate + ATP. Its pathway is amino-acid biosynthesis; L-histidine biosynthesis; L-histidine from 5-phospho-alpha-D-ribose 1-diphosphate: step 1/9. With respect to regulation, feedback inhibited by histidine. Its function is as follows. Catalyzes the condensation of ATP and 5-phosphoribose 1-diphosphate to form N'-(5'-phosphoribosyl)-ATP (PR-ATP). Has a crucial role in the pathway because the rate of histidine biosynthesis seems to be controlled primarily by regulation of HisG enzymatic activity. This Haloarcula marismortui (strain ATCC 43049 / DSM 3752 / JCM 8966 / VKM B-1809) (Halobacterium marismortui) protein is ATP phosphoribosyltransferase.